Consider the following 235-residue polypeptide: Small ribosomal subunit protein uS2c (235 aa).

The protein belongs to the universal ribosomal protein uS2 family.

It is found in the plastid. The protein localises to the chloroplast. In Guillardia theta (Cryptophyte), this protein is Small ribosomal subunit protein uS2c (rps2).